Reading from the N-terminus, the 450-residue chain is Tripartite motif-containing protein 64C (450 aa).

An RING-type zinc finger spans residues 15–56 (CCICVNYFIDPVTTDCVHSFCRPCLCLCSEEGRAPMRCPLCR). A B box-type zinc finger spans residues 87–128 (SSDNICVLHEETKELFCEADKRLLCGPCSESPEHMAHSHSPI). Cys-92, His-95, Cys-114, and His-120 together coordinate Zn(2+). The stretch at 191–218 (DEEEQRHLQALEREAKELFQQLQDSQVR) forms a coiled coil. Residues 269 to 450 (ELTSWCITGV…LRPFFCFGCT (182 aa)) form the B30.2/SPRY domain.

It belongs to the TRIM/RBCC family.

This is Tripartite motif-containing protein 64C (TRIM64C) from Homo sapiens (Human).